Here is a 101-residue protein sequence, read N- to C-terminus: Citrinin resistance protein, mitochondrial (101 aa).

It is found in the mitochondrion. Its function is as follows. Mitochondrial protein that is involved in citrinin resistance. This Saccharomyces cerevisiae (strain ATCC 204508 / S288c) (Baker's yeast) protein is Citrinin resistance protein, mitochondrial.